We begin with the raw amino-acid sequence, 216 residues long: Large ribosomal subunit protein uL1 (216 aa).

It belongs to the universal ribosomal protein uL1 family. As to quaternary structure, component of the large ribosomal subunit.

Its subcellular location is the cytoplasm. Component of the large ribosomal subunit. The ribosome is a large ribonucleoprotein complex responsible for the synthesis of proteins in the cell. This chain is Large ribosomal subunit protein uL1 (rpl10a), found in Ictalurus punctatus (Channel catfish).